A 65-amino-acid chain; its full sequence is UPF0434 protein IL1511 (65 aa).

The protein belongs to the UPF0434 family.

The polypeptide is UPF0434 protein IL1511 (Idiomarina loihiensis (strain ATCC BAA-735 / DSM 15497 / L2-TR)).